The following is a 556-amino-acid chain: MLSDIEIAQRAKVWPIAKVAVKLGIKKSQIELYGHYKAKLSFDCIKKLQKKPDGNLILVTAISPTAAGEGKSTTTVGLAQALAKIGKKAIVALREPSLGPCMGIKGGAAGGGYSQVVPMEDINLHFTGDMHAITAANNLLSAIIDNHIHQGNELGIDERRIVWHRVVDINDRALRNIVVALGGKGNGFPREDSFDITVASEVMAILCLSESLADLKKRLSKVIVGYNFADKPVTAGMLKAEGAMAALLKDAIKPNLVQTLENVPAIIHGGPFANIAHGCNSVIATKTALKLADYIVTEAGFGADLGAEKFFNIKCRYAGLTPKVAIIVATVRALKMHGGVSKDKLTHLDKQAVIRGLVNLDKHIENVKKFGVPPVVAINIFSGDSKEEIAAVKAHCKKIGVPVELSDVFAKGGEGGIQLAKKVVDIISKNKSKFRFTYESEDSLEEKTKKIVKNIYGAKDVFFDKKALDSIKKYEAMGFGNIPVCMAKTQYSFSDNPKLYGRPEGFTIEVREARISAGAGFVVMLTGNIMTMPGLPKFPAAEKIDISSEGVIKGLS.

Position 65 to 72 (65 to 72) interacts with ATP; it reads TAAGEGKS.

Belongs to the formate--tetrahydrofolate ligase family.

It carries out the reaction (6S)-5,6,7,8-tetrahydrofolate + formate + ATP = (6R)-10-formyltetrahydrofolate + ADP + phosphate. The protein operates within one-carbon metabolism; tetrahydrofolate interconversion. In Elusimicrobium minutum (strain Pei191), this protein is Formate--tetrahydrofolate ligase.